A 444-amino-acid chain; its full sequence is Divalent metal cation transporter MntH (444 aa).

The next 11 membrane-spanning stretches (helical) occupy residues 31–51 (GGHW…VSVG), 68–88 (FGYL…VLQG), 115–135 (LALW…EVIG), 146–166 (IPLT…LLLM), 175–195 (AFVM…IALA), 212–232 (VVTN…TVMP), 267–287 (VALM…AAVF), 303–323 (ALLA…VALL), 356–376 (LLTR…YGEA), 381–401 (LLVL…IPLV), and 413–433 (LVAP…IVGL).

The protein belongs to the NRAMP family.

It localises to the cell inner membrane. Its function is as follows. H(+)-stimulated, divalent metal cation uptake system. The sequence is that of Divalent metal cation transporter MntH from Xanthomonas campestris pv. campestris (strain ATCC 33913 / DSM 3586 / NCPPB 528 / LMG 568 / P 25).